An 841-amino-acid chain; its full sequence is Microcephalin (841 aa).

The BRCT 1 domain occupies 1–93; the sequence is MAAPILKDVV…AHIDESLFPA (93 aa). Residues serine 278, serine 286, serine 295, and serine 332 each carry the phosphoserine modification. The residue at position 334 (threonine 334) is a Phosphothreonine. Disordered stretches follow at residues 340–375, 417–445, 481–507, and 562–593; these read GHLL…RKRS, PDNL…SCRS, SSPQ…SAPE, and VGLK…PRSV. Residues 342 to 358 are compositionally biased toward basic residues; sequence LLIHSRPRSSSVKRKRV. A compositionally biased stretch (polar residues) spans 433-445; sequence QLPSSPAQFSCRS. Positions 565-583 are enriched in polar residues; the sequence is KSTQDKGTTSKISNSSEGE. 2 BRCT domains span residues 646 to 736 and 757 to 839; these read SGKG…SFEL and YRGT…NYLL.

Interacts with CDC27 and maybe other components of the APC/C complex. Interacts with histone variant H2AX under DNA damage conditions.

Its subcellular location is the cytoplasm. It is found in the cytoskeleton. The protein resides in the microtubule organizing center. The protein localises to the centrosome. Implicated in chromosome condensation and DNA damage induced cellular responses. May play a role in neurogenesis and regulation of the size of the cerebral cortex. The chain is Microcephalin from Colobus guereza (Mantled guereza).